A 426-amino-acid polypeptide reads, in one-letter code: Cytochrome c biogenesis protein CcsB (426 aa).

3 helical membrane-spanning segments follow: residues 11–31 (LRVA…GTAI), 69–89 (SVWF…CSWR), and 159–179 (VGPL…VWGV).

Belongs to the Ccs1/CcsB family. May interact with CcsA.

It is found in the cellular thylakoid membrane. Functionally, required during biogenesis of c-type cytochromes (cytochrome c6 and cytochrome f) at the step of heme attachment. The protein is Cytochrome c biogenesis protein CcsB of Synechococcus sp. (strain CC9902).